The sequence spans 325 residues: Ribosomal RNA small subunit methyltransferase H (325 aa).

Residues 32–34 (GGH), Asp-52, Phe-79, Asp-100, and Gln-107 contribute to the S-adenosyl-L-methionine site.

This sequence belongs to the methyltransferase superfamily. RsmH family.

Its subcellular location is the cytoplasm. It carries out the reaction cytidine(1402) in 16S rRNA + S-adenosyl-L-methionine = N(4)-methylcytidine(1402) in 16S rRNA + S-adenosyl-L-homocysteine + H(+). Specifically methylates the N4 position of cytidine in position 1402 (C1402) of 16S rRNA. The protein is Ribosomal RNA small subunit methyltransferase H of Oceanobacillus iheyensis (strain DSM 14371 / CIP 107618 / JCM 11309 / KCTC 3954 / HTE831).